A 528-amino-acid polypeptide reads, in one-letter code: Probable rhamnogalacturonate lyase A (528 aa).

The N-terminal stretch at 1 to 20 (MLSKATLLLFLPSWARVTYA) is a signal peptide. Asn-46 carries N-linked (GlcNAc...) asparagine glycosylation. An intrachain disulfide couples Cys-50 to Cys-93. N-linked (GlcNAc...) asparagine glycosylation is present at Asn-148. An intrachain disulfide couples Cys-184 to Cys-193. Asn-351 carries N-linked (GlcNAc...) asparagine glycosylation.

It belongs to the polysaccharide lyase 4 family.

Its subcellular location is the secreted. The catalysed reaction is Endotype eliminative cleavage of L-alpha-rhamnopyranosyl-(1-&gt;4)-alpha-D-galactopyranosyluronic acid bonds of rhamnogalacturonan I domains in ramified hairy regions of pectin leaving L-rhamnopyranose at the reducing end and 4-deoxy-4,5-unsaturated D-galactopyranosyluronic acid at the non-reducing end.. Pectinolytic enzymes consist of four classes of enzymes: pectin lyase, polygalacturonase, pectin methylesterase and rhamnogalacturonase. Degrades the rhamnogalacturonan I (RG-I) backbone of pectin. The chain is Probable rhamnogalacturonate lyase A (rglA) from Aspergillus fumigatus (strain CBS 144.89 / FGSC A1163 / CEA10) (Neosartorya fumigata).